A 376-amino-acid chain; its full sequence is uncharacterized protein (376 aa).

The helical transmembrane segment at F19–Y39 threads the bilayer.

It to S.pombe SpAC5H10.12c.

It localises to the cytoplasm. The protein localises to the nucleus. It is found in the membrane. This is an uncharacterized protein from Schizosaccharomyces pombe (strain 972 / ATCC 24843) (Fission yeast).